A 145-amino-acid polypeptide reads, in one-letter code: D-aminoacyl-tRNA deacylase (145 aa).

Positions 137–138 (GP) match the Gly-cisPro motif, important for rejection of L-amino acids motif.

Belongs to the DTD family. In terms of assembly, homodimer.

The protein resides in the cytoplasm. The catalysed reaction is glycyl-tRNA(Ala) + H2O = tRNA(Ala) + glycine + H(+). The enzyme catalyses a D-aminoacyl-tRNA + H2O = a tRNA + a D-alpha-amino acid + H(+). In terms of biological role, an aminoacyl-tRNA editing enzyme that deacylates mischarged D-aminoacyl-tRNAs. Also deacylates mischarged glycyl-tRNA(Ala), protecting cells against glycine mischarging by AlaRS. Acts via tRNA-based rather than protein-based catalysis; rejects L-amino acids rather than detecting D-amino acids in the active site. By recycling D-aminoacyl-tRNA to D-amino acids and free tRNA molecules, this enzyme counteracts the toxicity associated with the formation of D-aminoacyl-tRNA entities in vivo and helps enforce protein L-homochirality. This Colwellia psychrerythraea (strain 34H / ATCC BAA-681) (Vibrio psychroerythus) protein is D-aminoacyl-tRNA deacylase.